The primary structure comprises 171 residues: NRR repressor homolog 2 (171 aa).

Basic and acidic residues predominate over residues 1–12 (MEARLSTGEKTK). Disordered regions lie at residues 1–45 (MEAR…QQQM), 65–94 (AALP…APWR), and 119–143 (TTKG…EEDK). Residues 26-43 (PEEETAAETTTSEEEEQQ) show a composition bias toward acidic residues.

It belongs to the NPR1-interactor family. Interacts with NPR1/NH1. Interacts with NPR3/NH3.

The protein resides in the nucleus. In terms of biological role, binds to and weakly represses NPR1/NH1-mediated transcriptional activation of LG2 in vitro. In Oryza sativa subsp. japonica (Rice), this protein is NRR repressor homolog 2.